We begin with the raw amino-acid sequence, 339 residues long: Protein FAM131B (339 aa).

Residues 1-22 (MDSTSSLHGSSLHRPSTEQTRT) are disordered. A phosphoserine mark is found at serine 47, serine 114, and serine 117. The segment at 222–339 (GPAFGDSQPS…PLLTQPSTPA (118 aa)) is disordered. Polar residues-rich tracts occupy residues 239 to 250 (QPASGYSAQEPS) and 324 to 339 (PTTS…STPA). At threonine 325 the chain carries Phosphothreonine. Position 327 is a phosphoserine (serine 327).

Belongs to the FAM131 family.

The protein is Protein FAM131B (FAM131B) of Bos taurus (Bovine).